The sequence spans 329 residues: Uroporphyrinogen decarboxylase (329 aa).

Residues 22–26 (RQVGR), D71, Y140, S195, and H307 each bind substrate.

This sequence belongs to the uroporphyrinogen decarboxylase family. As to quaternary structure, homodimer.

It localises to the cytoplasm. The enzyme catalyses uroporphyrinogen III + 4 H(+) = coproporphyrinogen III + 4 CO2. The protein operates within porphyrin-containing compound metabolism; protoporphyrin-IX biosynthesis; coproporphyrinogen-III from 5-aminolevulinate: step 4/4. Functionally, catalyzes the decarboxylation of four acetate groups of uroporphyrinogen-III to yield coproporphyrinogen-III. This Chlamydia pneumoniae (Chlamydophila pneumoniae) protein is Uroporphyrinogen decarboxylase.